The sequence spans 319 residues: Acetyl-coenzyme A carboxylase carboxyl transferase subunit alpha (319 aa).

The CoA carboxyltransferase C-terminal domain maps to 35–296; it reads NLDEEVQRLR…KAQLLDDLSE (262 aa).

Belongs to the AccA family. As to quaternary structure, acetyl-CoA carboxylase is a heterohexamer composed of biotin carboxyl carrier protein (AccB), biotin carboxylase (AccC) and two subunits each of ACCase subunit alpha (AccA) and ACCase subunit beta (AccD).

It localises to the cytoplasm. The enzyme catalyses N(6)-carboxybiotinyl-L-lysyl-[protein] + acetyl-CoA = N(6)-biotinyl-L-lysyl-[protein] + malonyl-CoA. It functions in the pathway lipid metabolism; malonyl-CoA biosynthesis; malonyl-CoA from acetyl-CoA: step 1/1. Component of the acetyl coenzyme A carboxylase (ACC) complex. First, biotin carboxylase catalyzes the carboxylation of biotin on its carrier protein (BCCP) and then the CO(2) group is transferred by the carboxyltransferase to acetyl-CoA to form malonyl-CoA. The polypeptide is Acetyl-coenzyme A carboxylase carboxyl transferase subunit alpha (Sodalis glossinidius (strain morsitans)).